A 545-amino-acid chain; its full sequence is CTP synthase (545 aa).

The tract at residues 1–266 (MATNYIFVTG…DSFVCDRFRL (266 aa)) is amidoligase domain. Serine 14 contacts CTP. Residue serine 14 participates in UTP binding. ATP is bound by residues 15–20 (SLGKGI) and aspartate 72. Mg(2+)-binding residues include aspartate 72 and glutamate 140. CTP is bound by residues 147–149 (DIE), 187–192 (KTKPTQ), and lysine 223. Residues 187–192 (KTKPTQ) and lysine 223 each bind UTP. 239-241 (KDV) serves as a coordination point for ATP. The Glutamine amidotransferase type-1 domain maps to 291 to 542 (TIGMVGKYVE…VAAAKAYQDS (252 aa)). L-glutamine is bound at residue glycine 352. Cysteine 379 functions as the Nucleophile; for glutamine hydrolysis in the catalytic mechanism. Residues 380–383 (LGMQ), glutamate 403, and arginine 470 contribute to the L-glutamine site. Catalysis depends on residues histidine 515 and glutamate 517.

The protein belongs to the CTP synthase family. As to quaternary structure, homotetramer.

It catalyses the reaction UTP + L-glutamine + ATP + H2O = CTP + L-glutamate + ADP + phosphate + 2 H(+). It carries out the reaction L-glutamine + H2O = L-glutamate + NH4(+). The enzyme catalyses UTP + NH4(+) + ATP = CTP + ADP + phosphate + 2 H(+). It functions in the pathway pyrimidine metabolism; CTP biosynthesis via de novo pathway; CTP from UDP: step 2/2. With respect to regulation, allosterically activated by GTP, when glutamine is the substrate; GTP has no effect on the reaction when ammonia is the substrate. The allosteric effector GTP functions by stabilizing the protein conformation that binds the tetrahedral intermediate(s) formed during glutamine hydrolysis. Inhibited by the product CTP, via allosteric rather than competitive inhibition. Its function is as follows. Catalyzes the ATP-dependent amination of UTP to CTP with either L-glutamine or ammonia as the source of nitrogen. Regulates intracellular CTP levels through interactions with the four ribonucleotide triphosphates. This is CTP synthase from Haemophilus ducreyi (strain 35000HP / ATCC 700724).